The sequence spans 198 residues: Glycerol-3-phosphate acyltransferase 2 (198 aa).

Helical transmembrane passes span 4–24 (TYLLFIVAYLLGSIPFALVVG), 71–91 (LPIIFALDIHPLWFGLAAVLG), 113–133 (LLCYSPVVFAILAVVFFSLLF), and 147–167 (VVAVIASIVSGDKIFIIAMCL).

Belongs to the PlsY family. As to quaternary structure, probably interacts with PlsX.

It is found in the cell membrane. It carries out the reaction an acyl phosphate + sn-glycerol 3-phosphate = a 1-acyl-sn-glycero-3-phosphate + phosphate. It functions in the pathway lipid metabolism; phospholipid metabolism. In terms of biological role, catalyzes the transfer of an acyl group from acyl-phosphate (acyl-PO(4)) to glycerol-3-phosphate (G3P) to form lysophosphatidic acid (LPA). This enzyme utilizes acyl-phosphate as fatty acyl donor, but not acyl-CoA or acyl-ACP. The polypeptide is Glycerol-3-phosphate acyltransferase 2 (Bacillus cereus (strain ATCC 10987 / NRS 248)).